Here is a 166-residue protein sequence, read N- to C-terminus: Cyclic pyranopterin monophosphate synthase (166 aa).

Residues 75–77 and 115–116 each bind substrate; these read MCH and ME. The active site involves Asp-130.

It belongs to the MoaC family. Homohexamer; trimer of dimers.

The enzyme catalyses (8S)-3',8-cyclo-7,8-dihydroguanosine 5'-triphosphate = cyclic pyranopterin phosphate + diphosphate. Its pathway is cofactor biosynthesis; molybdopterin biosynthesis. In terms of biological role, catalyzes the conversion of (8S)-3',8-cyclo-7,8-dihydroguanosine 5'-triphosphate to cyclic pyranopterin monophosphate (cPMP). The sequence is that of Cyclic pyranopterin monophosphate synthase from Shouchella clausii (strain KSM-K16) (Alkalihalobacillus clausii).